The sequence spans 426 residues: Gamma-glutamyl phosphate reductase (426 aa).

Belongs to the gamma-glutamyl phosphate reductase family.

The protein localises to the cytoplasm. It carries out the reaction L-glutamate 5-semialdehyde + phosphate + NADP(+) = L-glutamyl 5-phosphate + NADPH + H(+). It functions in the pathway amino-acid biosynthesis; L-proline biosynthesis; L-glutamate 5-semialdehyde from L-glutamate: step 2/2. In terms of biological role, catalyzes the NADPH-dependent reduction of L-glutamate 5-phosphate into L-glutamate 5-semialdehyde and phosphate. The product spontaneously undergoes cyclization to form 1-pyrroline-5-carboxylate. This chain is Gamma-glutamyl phosphate reductase, found in Paracidovorax citrulli (strain AAC00-1) (Acidovorax citrulli).